The chain runs to 342 residues: Nucleoid-associated protein Shewmr4_2217 (342 aa).

The protein belongs to the YejK family.

It localises to the cytoplasm. The protein resides in the nucleoid. This Shewanella sp. (strain MR-4) protein is Nucleoid-associated protein Shewmr4_2217.